A 407-amino-acid chain; its full sequence is Proteasome-activating nucleotidase (407 aa).

Residues 22-67 are a coiled coil; that stretch reads KEKTQIAELESKVLRLELKNKDINRENVQIKKENEILKRELDKLRI. Residues 192–197 and histidine 331 contribute to the ATP site; that span reads GTGKTL. The segment at 405–407 is docks into pockets in the proteasome alpha-ring to cause gate opening; the sequence is MYG.

The protein belongs to the AAA ATPase family. As to quaternary structure, homohexamer. The hexameric complex has a two-ring architecture resembling a top hat that caps the 20S proteasome core at one or both ends. Upon ATP-binding, the C-terminus of PAN interacts with the alpha-rings of the proteasome core by binding to the intersubunit pockets.

The protein localises to the cytoplasm. Its function is as follows. ATPase which is responsible for recognizing, binding, unfolding and translocation of substrate proteins into the archaeal 20S proteasome core particle. Is essential for opening the gate of the 20S proteasome via an interaction with its C-terminus, thereby allowing substrate entry and access to the site of proteolysis. Thus, the C-termini of the proteasomal ATPase function like a 'key in a lock' to induce gate opening and therefore regulate proteolysis. Unfolding activity requires energy from ATP hydrolysis, whereas ATP binding alone promotes ATPase-20S proteasome association which triggers gate opening, and supports translocation of unfolded substrates. The protein is Proteasome-activating nucleotidase of Methanococcus maripaludis (strain DSM 14266 / JCM 13030 / NBRC 101832 / S2 / LL).